A 90-amino-acid polypeptide reads, in one-letter code: Small ribosomal subunit protein uS15c (90 aa).

It belongs to the universal ribosomal protein uS15 family. Part of the 30S ribosomal subunit.

Its subcellular location is the plastid. The protein localises to the chloroplast. The chain is Small ribosomal subunit protein uS15c (rps15) from Manihot esculenta (Cassava).